A 126-amino-acid polypeptide reads, in one-letter code: Large ribosomal subunit protein uL22 (126 aa).

It belongs to the universal ribosomal protein uL22 family. As to quaternary structure, part of the 50S ribosomal subunit.

In terms of biological role, this protein binds specifically to 23S rRNA; its binding is stimulated by other ribosomal proteins, e.g. L4, L17, and L20. It is important during the early stages of 50S assembly. It makes multiple contacts with different domains of the 23S rRNA in the assembled 50S subunit and ribosome. The globular domain of the protein is located near the polypeptide exit tunnel on the outside of the subunit, while an extended beta-hairpin is found that lines the wall of the exit tunnel in the center of the 70S ribosome. This is Large ribosomal subunit protein uL22 from Paracoccus denitrificans (strain Pd 1222).